Here is a 677-residue protein sequence, read N- to C-terminus: WD repeat-containing protein 48 (677 aa).

WD repeat units follow at residues 28–67 (YNRN…QDPY), 73–112 (HHTD…CMST), 115–154 (THKD…ALTA), 166–205 (GNKD…KLMK), 208–247 (GHTD…CIAT), 250–289 (VHDE…MRVL), 292–334 (EEKA…NFRA), and 358–397 (KGGT…KGED). The disordered stretch occupies residues 611–632 (SQATSSSANDKPGEQEKEEDVS).

The protein belongs to the WD repeat WDR48 family.

It localises to the nucleus. The protein localises to the cytoplasm. The protein resides in the lysosome. Its subcellular location is the late endosome. Functionally, regulator of deubiquitinating complexes, which acts as a strong activator of usp1, usp12 and usp46. Enhances the usp1-mediated deubiquitination of fancd2; usp1 being almost inactive by itself. Activates deubiquitination by increasing the catalytic turnover without increasing the affinity of deubiquitinating enzymes for the substrate. Also activates deubiquitinating activity of complexes containing usp12. Together with rad51ap1, promotes DNA repair by stimulating rad51-mediated homologous recombination. Binds single-stranded DNA (ssDNA) and double-stranded DNA (dsDNA). DNA-binding is required both for usp1-mediated deubiquitination of fancd2 and stimulation of rad51-mediated homologous recombination: both wdr48/uaf1 and rad51ap1 have coordinated role in DNA-binding during these processes. Together with atad5 and by regulating usp1 activity, has a role in pcna-mediated translesion synthesis (TLS) by deubiquitinating monoubiquitinated pcna. Together with atad5, has a role in recruiting rad51 to stalled forks during replication stress. The polypeptide is WD repeat-containing protein 48 (wdr48) (Danio rerio (Zebrafish)).